The following is a 290-amino-acid chain: uncharacterized protein (290 aa).

The next 5 helical transmembrane spans lie at 10–27 (FFVA…LLLI), 32–54 (VNYI…YFFS), 69–91 (ILVP…GVLI), 100–117 (VLAG…FFYF), and 121–143 (YLLM…NFEY). Residues 147-183 (VGKERKRILKLKKNYHKLLKEFSNFEREKRMFSNLRK) are a coiled coil.

The protein resides in the cell membrane. This is an uncharacterized protein from Aquifex aeolicus (strain VF5).